The chain runs to 331 residues: Cytosolic Fe-S cluster assembly factor NBP35 (331 aa).

Residues 1–10 (MSPSQTQIEK) are compositionally biased toward polar residues. The interval 1 to 32 (MSPSQTQIEKSQLAAPEPEHCPGPESELAGQG) is disordered. Residues Cys-21, Cys-35, Cys-38, and Cys-44 each coordinate [4Fe-4S] cluster. 75–82 (GKGGVGKS) provides a ligand contact to ATP. [4Fe-4S] cluster is bound by residues Cys-249 and Cys-252.

It belongs to the Mrp/NBP35 ATP-binding proteins family. NUBP1/NBP35 subfamily. In terms of assembly, heterotetramer of 2 NBP35 and 2 CFD1 chains. The cofactor is [4Fe-4S] cluster.

Its subcellular location is the cytoplasm. It localises to the nucleus. In terms of biological role, component of the cytosolic iron-sulfur (Fe/S) protein assembly (CIA) machinery. Required for maturation of extramitochondrial Fe-S proteins. The NBP35-CFD1 heterotetramer forms a Fe-S scaffold complex, mediating the de novo assembly of an Fe-S cluster and its transfer to target apoproteins. Required for biogenesis and export of both ribosomal subunits, which may reflect a role in assembly of the Fe/S clusters in RLI1, a protein which performs rRNA processing and ribosome export. The chain is Cytosolic Fe-S cluster assembly factor NBP35 from Candida albicans (strain SC5314 / ATCC MYA-2876) (Yeast).